We begin with the raw amino-acid sequence, 77 residues long: Small ribosomal subunit protein uS17 (77 aa).

Belongs to the universal ribosomal protein uS17 family. In terms of assembly, part of the 30S ribosomal subunit.

Its function is as follows. One of the primary rRNA binding proteins, it binds specifically to the 5'-end of 16S ribosomal RNA. This Rickettsia rickettsii (strain Sheila Smith) protein is Small ribosomal subunit protein uS17.